A 311-amino-acid polypeptide reads, in one-letter code: tRNA dimethylallyltransferase (311 aa).

12–19 (GPTASGKT) is a binding site for ATP. 14-19 (TASGKT) is a substrate binding site. Interaction with substrate tRNA regions lie at residues 37–40 (DSAL), 161–165 (QRINR), and 241–246 (RCVGYR).

The protein belongs to the IPP transferase family. In terms of assembly, monomer. Mg(2+) serves as cofactor.

It catalyses the reaction adenosine(37) in tRNA + dimethylallyl diphosphate = N(6)-dimethylallyladenosine(37) in tRNA + diphosphate. In terms of biological role, catalyzes the transfer of a dimethylallyl group onto the adenine at position 37 in tRNAs that read codons beginning with uridine, leading to the formation of N6-(dimethylallyl)adenosine (i(6)A). The protein is tRNA dimethylallyltransferase of Histophilus somni (strain 2336) (Haemophilus somnus).